We begin with the raw amino-acid sequence, 641 residues long: WW domain-binding protein 11 (641 aa).

Residues 1-11 are compositionally biased toward polar residues; that stretch reads MGRRSTSSTKS. The tract at residues 1-37 is disordered; sequence MGRRSTSSTKSGKFMNPTDQARKEARKRELKKNKKQR. Residues 1–45 are required for nuclear import; the sequence is MGRRSTSSTKSGKFMNPTDQARKEARKRELKKNKKQRMMVRAAVL. Residue lysine 13 is modified to N6-acetyllysine. Positions 28-37 are enriched in basic residues; it reads RELKKNKKQR. Residues 75–133 adopt a coiled-coil conformation; that stretch reads EKVLKDKRKKLRETFERILRLYEKENPDIYKELRKLEVEYEQKRAQLSQYFDAVKNAQH. Serine 181 is subject to Phosphoserine. The disordered stretch occupies residues 186-213; it reads LGHGVPRLPPGRKPPGPPPGPPPPQVLQ. Arginine 192 is modified (omega-N-methylarginine). The span at 192–210 shows a compositional bias: pro residues; it reads RLPPGRKPPGPPPGPPPPQ. An interaction with PP1 region spans residues 217–221; the sequence is RKVGF. Tyrosine 236 carries the post-translational modification Phosphotyrosine. The segment at 236–549 is disordered; the sequence is YSPELAQRGH…LIQRPKADDA (314 aa). Serine 237 carries the phosphoserine modification. Residues 253 to 263 are compositionally biased toward acidic residues; the sequence is SEDDGYPEDMD. Residues 276–304 are compositionally biased toward basic and acidic residues; that stretch reads TDRSDAESDGDEFGHRDDSERDNTEEKKS. Residues serine 279 and serine 283 each carry the phosphoserine modification. An interaction with PP1 region spans residues 306–310; the sequence is LSVRF. Residues 351–365 are compositionally biased toward acidic residues; that stretch reads EFSEEEDDDDSEDSE. Phosphoserine occurs at positions 353, 361, and 364. The span at 366–380 shows a compositional bias: basic and acidic residues; that stretch reads AEKPSQKQHKEDSHA. The segment covering 381–404 has biased composition (low complexity); it reads DGSSAASSQQQAPPQAVPPSQIQA. Composition is skewed to pro residues over residues 405–447, 456–504, and 510–530; these read PPMP…PPGM, RLLP…PPRP, and PLVP…PLPN. The short motif at 455 to 466 is the PGR element; that stretch reads PRLLPPGPPPGR. Residue lysine 557 forms a Glycyl lysine isopeptide (Lys-Gly) (interchain with G-Cter in SUMO2) linkage. Lysine 565 carries the post-translational modification N6-acetyllysine. Lysine 572 is covalently cross-linked (Glycyl lysine isopeptide (Lys-Gly) (interchain with G-Cter in SUMO2)). Residues 588–623 are disordered; it reads ENKGATAVPQRRSEEDSAVPVAKAAPRSGPSVPVSV. Serine 600 is modified (phosphoserine).

In terms of assembly, interacts with PPP1CA, PPP1CB and PPP1CC. Interacts via the PGR motif with PQBP1 in the nucleus. Interacts with the WW domains of WBP4.

The protein localises to the nucleus. The protein resides in the cytoplasm. Functionally, activates pre-mRNA splicing. May inhibit PP1 phosphatase activity. The chain is WW domain-binding protein 11 (Wbp11) from Rattus norvegicus (Rat).